A 377-amino-acid polypeptide reads, in one-letter code: Protein MULTIPOLAR SPINDLE 1 (377 aa).

A Nuclear localization signal motif is present at residues 117-124; the sequence is LRRRFLRL.

Expressed in roots, stems, leaves, inflorescences and seedlings. Strongly expressed in meiocytes.

The protein localises to the nucleus. It localises to the cytoplasm. Its subcellular location is the cytoskeleton. It is found in the spindle. Its function is as follows. Involved in meiotic spindle organization in meiocytes thus regulating chromosome segregation. Required for formation of meiotic DNA double-strand breaks (DSBs) during early recombination processes. This chain is Protein MULTIPOLAR SPINDLE 1, found in Arabidopsis thaliana (Mouse-ear cress).